Consider the following 490-residue polypeptide: Phosphoethanolamine N-methyltransferase 3 (490 aa).

S-adenosyl-L-homocysteine contacts are provided by G60, R65, D81, D106, V107, and N125. The phosphocholine site is built by S158, S163, G164, R168, and Y175. Residues 244–245 (QY) and Y253 contribute to the N-methylethanolamine phosphate site. Position 253 (Y253) interacts with phosphocholine. Positions 262, 263, 289, 311, 337, 338, and 354 each coordinate S-adenosyl-L-homocysteine. Phosphocholine is bound by residues Y385, Y399, R403, Y405, and K471. N-methylethanolamine phosphate-binding positions include Y385, Y399, 403-405 (RGY), and K471.

It belongs to the class I-like SAM-binding methyltransferase superfamily. PEAMT family. In terms of tissue distribution, expressed in root vasculature, shoots, rosettes leaves, cauline leaves, sepals, petals, anther filaments and ovules. Highly expressed in leaf vasculature.

It localises to the cytoplasm. The enzyme catalyses phosphoethanolamine + S-adenosyl-L-methionine = N-methylethanolamine phosphate + S-adenosyl-L-homocysteine + H(+). It catalyses the reaction N-methylethanolamine phosphate + S-adenosyl-L-methionine = N,N-dimethylethanolamine phosphate + S-adenosyl-L-homocysteine + H(+). It carries out the reaction N,N-dimethylethanolamine phosphate + S-adenosyl-L-methionine = phosphocholine + S-adenosyl-L-homocysteine + H(+). It functions in the pathway phospholipid metabolism; phosphatidylcholine biosynthesis; phosphocholine from phosphoethanolamine: step 1/1. Its function is as follows. Involved in phosphocholine biosynthesis. Catalyzes the N-methylation of phosphoethanolamine, phosphomonomethylethanolamine and phosphodimethylethanolamine, the three methylation steps required to convert phosphoethanolamine to phosphocholine (PC). In association with NMT1, regulates PC homeostasis, phase transition at the shoot apex, coordinated organ development, and fertility. In associtation with NMT1, involved in phosphatidylcholine biosynthesis and vascular development. This chain is Phosphoethanolamine N-methyltransferase 3, found in Arabidopsis thaliana (Mouse-ear cress).